The chain runs to 643 residues: MQLTRLVQVDCPLGPDVLLLQRMEGREELGRLFAYELHLVSENPNLPLEQLLGKPMSLSLELPGGSRRFFHGIVARCSQVAGHGQFAGYQATLRPWPWLLTRTSDCRIFQNQSVPEIIKQVFRNLGFSDFEDALTRPYREWEYCVQYRETSFDFISRLMEQEGIYYWFRHEQKRHILVLSDAYGAHRSPGGYASVPYYPPTLGHRERDHFFDWQMAREVQPGSLTLNDYDFQRPGARLEVRSNIARPHAAADYPLYDYPGEYVQSQDGEQYARNRIEAIQAQHERVRLRGVVRGIGAGHLFRLSGYPRDDQNREYLVVGAEYRVVQELYETGSGGAGSQFESELDCIDASQSFRLLPQTPVPVVRGPQTAVVVGPKGEEIWTDQYGRVKVHFHWDRHDQSNENSSCWIRVSQAWAGKNWGSMQIPRIGQEVIVSFLEGDPDRPIITGRVYNAEQTVPYELPANATQSGMKSRSSKGGTPANFNEIRMEDKKGAEQLYIHAERNQDNLVENDASLSVGHDRNKSIGHDELARIGNNRTRAVKLNDTLLVGGAKSDSVTGTYLIEAGAQIRLVCGKSVVEFNADGTINISGSAFNLYASGNGNIDTGGRLDLNSGGASEVDAKGKGVQGTIDGQVQAMFPPPAKG.

The protein belongs to the VgrG protein family. In terms of assembly, forms homotrimers. Part of the type VI secretion system (T6SS). Interacts with EagT6 and Tse6; these interactions are required for Tse6 loading onto VgrG1. Interacts with Hcp1.

The protein resides in the secreted. Part of the H1 type VI secretion system (H1-T6SS) specialized secretion system, which delivers several virulence factors in both prokaryotic and eukaryotic cells during infection. Forms the spike at the tip of the elongating tube formed by haemolysin co-regulated protein 1/Hcp1. Allows the delivery of the Tse6 toxin to target cells where it exerts its toxicity. The chain is Type VI secretion system spike protein VgrG1a from Pseudomonas aeruginosa (strain ATCC 15692 / DSM 22644 / CIP 104116 / JCM 14847 / LMG 12228 / 1C / PRS 101 / PAO1).